The chain runs to 729 residues: Circadian input-output histidine kinase CikA (729 aa).

An N-terminal domain region spans residues 1 to 169 (MPQPIFDRIL…QVTTQIRQSL (169 aa)). The interval 170–314 (ELPELLKIAV…VEFLTHLSQH (145 aa)) is GAF domain. The region spanning 366–587 (TMSHELRTPL…TFTVGLPAIS (222 aa)) is the Histidine kinase domain. At His369 the chain carries Phosphohistidine; by autocatalysis. The tract at residues 613–729 (EGRIVLVSED…GLTSLATSAQ (117 aa)) is psR domain, binds KaiB.

In the N-terminal section; belongs to the phytochrome family. In terms of assembly, homodimer. Part of the circadian clock (KaiA, KaiB, KaiC, CikA, RpaA, SasA), the composition of which varies during the circadian cycle. KaiA and CikA compete for binding to KaiB(fs). The PsR domain binds the KaiB:KaiC CI complex but poorly to either protein alone. KaiA and CikA bind to the same region of the KaiB(fs) form and therefore compete.

The enzyme catalyses ATP + protein L-histidine = ADP + protein N-phospho-L-histidine.. Its function is as follows. Functions in an input pathway to the Kai circadian clock. Senses oxidized quinones via its C-terminal pseudo-receiver domain, providing a link between cell metabolism and the clock. Affects the ratio of phosphorylated to unphosphorylated KaiC, binds quinones via its pseudo-receptor domain. Quinone-binding destabilizes the protein rapidly. Autophosphorylates, does not transfer the phosphate to its pseudo-receiver (PsR) domain. May play a role in cell division. In terms of biological role, also functions in a two-component CikA/RpaA output pathway from the circadian clock, negatively regulating kaiBC expression independently of labA and of sasA. One of three clock output pathways. Dephosphorylates phospho-RpaA, enhanced by KaiB and KaiC, has only modest kinase activity on RpaA. The protein is Circadian input-output histidine kinase CikA of Thermosynechococcus vestitus (strain NIES-2133 / IAM M-273 / BP-1).